The sequence spans 429 residues: UDP-N-acetylglucosamine 1-carboxyvinyltransferase (429 aa).

22 to 23 (KN) provides a ligand contact to phosphoenolpyruvate. Residue arginine 102 coordinates UDP-N-acetyl-alpha-D-glucosamine. The active-site Proton donor is cysteine 126. Position 126 is a 2-(S-cysteinyl)pyruvic acid O-phosphothioketal (cysteine 126). Residues 131 to 135 (RPVDL), aspartate 316, and isoleucine 338 contribute to the UDP-N-acetyl-alpha-D-glucosamine site.

This sequence belongs to the EPSP synthase family. MurA subfamily.

The protein resides in the cytoplasm. It carries out the reaction phosphoenolpyruvate + UDP-N-acetyl-alpha-D-glucosamine = UDP-N-acetyl-3-O-(1-carboxyvinyl)-alpha-D-glucosamine + phosphate. It functions in the pathway cell wall biogenesis; peptidoglycan biosynthesis. Cell wall formation. Adds enolpyruvyl to UDP-N-acetylglucosamine. This is UDP-N-acetylglucosamine 1-carboxyvinyltransferase from Methylobacterium radiotolerans (strain ATCC 27329 / DSM 1819 / JCM 2831 / NBRC 15690 / NCIMB 10815 / 0-1).